A 348-amino-acid polypeptide reads, in one-letter code: Ion-translocating oxidoreductase complex subunit D (348 aa).

The next 5 membrane-spanning stretches (helical) occupy residues 15–35 (LTAK…GMQA), 36–56 (YFFG…AVAI), 67–87 (LTAF…LAIS), 88–108 (IPPY…LLLA), and 125–145 (VAYA…LVPI). Thr186 is subject to FMN phosphoryl threonine. Transmembrane regions (helical) follow at residues 212–232 (LFAN…LLLI), 241–261 (IPAA…LLLP), 265–285 (LNVV…FIAT), 298–318 (LIFG…GNYP), and 320–340 (AVAF…HYTQ).

The protein belongs to the NqrB/RnfD family. As to quaternary structure, the complex is composed of six subunits: RnfA, RnfB, RnfC, RnfD, RnfE and RnfG. FMN is required as a cofactor.

The protein resides in the cell inner membrane. Part of a membrane-bound complex that couples electron transfer with translocation of ions across the membrane. The protein is Ion-translocating oxidoreductase complex subunit D of Actinobacillus pleuropneumoniae serotype 3 (strain JL03).